The following is a 224-amino-acid chain: Putative O-methyltransferase MT1258 (224 aa).

The span at 1–10 shows a compositional bias: basic and acidic residues; the sequence is MDGTPGHDDM. A disordered region spans residues 1-21; it reads MDGTPGHDDMPGQPAPSRGES. S-adenosyl-L-methionine-binding positions include Val51, Glu73, 75–76, Ser81, Asp99, and Ile100; that span reads GT. A substrate-binding site is contributed by Asp147. Asp149 contributes to the S-adenosyl-L-methionine binding site.

It belongs to the class I-like SAM-binding methyltransferase superfamily. Cation-dependent O-methyltransferase family.

This chain is Putative O-methyltransferase MT1258, found in Mycobacterium tuberculosis (strain CDC 1551 / Oshkosh).